The chain runs to 465 residues: WASH complex subunit 1 (465 aa).

The segment at 1–54 (MTPVRMQHSLAGQTYAVPFIQPDLRREEAVQQMADALQYLQKVSGDIFSRISQQ) is required for WASH complex assembly. Residues 1 to 167 (MTPVRMQHSL…EGLGGLPSNI (167 aa)) are WHD1. K220 participates in a covalent cross-link: Glycyl lysine isopeptide (Lys-Gly) (interchain with G-Cter in ubiquitin). Disordered stretches follow at residues 297 to 359 (QDGV…VDPS), 376 to 407 (GKAK…QGGH), and 423 to 465 (ISGK…DWES). The span at 302–314 (TPPPPPPPPPPAP) shows a compositional bias: pro residues. Residues 349–465 (QGAPREVVDP…AEEDEDDWES (117 aa)) form a VCA region. One can recognise a WH2 domain in the interval 361–383 (GWATLLESIRQAGGIGKAKLRSM). A compositionally biased stretch (basic and acidic residues) spans 382-398 (SMKERKLEKQQQKEQEQ). Residues 424-436 (SGKGPGAGEGPGG) are compositionally biased toward gly residues. Over residues 456–465 (AEEDEDDWES) the composition is skewed to acidic residues.

Belongs to the WASH1 family. As to quaternary structure, component of the WASH core complex also described as WASH regulatory complex (SHRC) composed of WASH (WASHC1, WASH2P or WASH3P), WASHC2 (WASHC2A or WASHC2C), WASHC3, WASHC4 and WASHC5. The WASH core complex associates via WASHC2 with the F-actin-capping protein dimer (formed by CAPZA1, CAPZA2 or CAPZA3 and CAPZB) in a transient or substoichiometric manner which was initially described as WASH complex. Interacts (via WHD1 region) with WASHC2C; the interaction is direct. Interacts with VPS35; mediates the association with the retromer CSC complex. Interacts with FKBP15. Interacts with alpha-tubulin. Interacts with BECN1; this interaction can be competed out by AMBRA1 binding. Interacts with BLOC1S2; may associate with the BLOC-1 complex. Interacts with tubulin gamma chain (TUBG1 or TUBG2). Interacts with EXOC1, EXOC4, EXOC8; in MMP14-positive endosomes in breast tumor cells; indicative for an association with the exocyst complex. Interacts with TBC1D23. In terms of processing, ubiquitinated at Lys-220 via 'Lys-63'-linked ubiquitin chains by the TRIM27:MAGEL2 E3 ubiquitin ligase complex, leading to promote endosomal F-actin assembly.

The protein localises to the early endosome membrane. Its subcellular location is the recycling endosome membrane. The protein resides in the late endosome. It is found in the cytoplasmic vesicle. It localises to the autophagosome. The protein localises to the cytoplasm. Its subcellular location is the cytoskeleton. The protein resides in the microtubule organizing center. It is found in the centrosome. It localises to the centriole. Its function is as follows. Acts as a component of the WASH core complex that functions as a nucleation-promoting factor (NPF) at the surface of endosomes, where it recruits and activates the Arp2/3 complex to induce actin polymerization, playing a key role in the fission of tubules that serve as transport intermediates during endosome sorting. Involved in endocytic trafficking of EGF. Involved in transferrin receptor recycling. Regulates the trafficking of endosomal alpha5beta1 integrin to the plasma membrane and involved in invasive cell migration. In T-cells involved in endosome-to-membrane recycling of receptors including T-cell receptor (TCR), CD28 and ITGAL; proposed to be implicated in T cell proliferation and effector function. In dendritic cells involved in endosome-to-membrane recycling of major histocompatibility complex (MHC) class II probably involving retromer and subsequently allowing antigen sampling, loading and presentation during T-cell activation. Involved in Arp2/3 complex-dependent actin assembly driving Salmonella typhimurium invasion independent of ruffling. Involved in the exocytosis of MMP14 leading to matrix remodeling during invasive migration and implicating late endosome-to-plasma membrane tubular connections and cooperation with the exocyst complex. Involved in negative regulation of autophagy independently from its role in endosomal sorting by inhibiting BECN1 ubiquitination to inactivate PIK3C3/Vps34 activity. The protein is WASH complex subunit 1 of Homo sapiens (Human).